The following is a 646-amino-acid chain: Galactofuranosyltransferase GlfT2 (646 aa).

UDP-alpha-D-galactofuranose-binding residues include Arg-182, Gln-211, Asn-240, and Asp-267. 2 residues coordinate Mn(2+): Asp-267 and Asp-269. Catalysis depends on Asp-384, which acts as the Proton acceptor. His-408 contributes to the Mn(2+) binding site.

The protein belongs to the glycosyltransferase 2 family. As to quaternary structure, homotetramer. It depends on Mn(2+) as a cofactor. Requires Mg(2+) as cofactor.

It is found in the cell membrane. The catalysed reaction is beta-D-galactofuranosyl-(1-&gt;5)-beta-D-galactofuranosyl-(1-&gt;4)-alpha-L-rhamnosyl-(1-&gt;3)-N-acetyl-alpha-D-glucosaminyl-diphospho-trans,octa-cis-decaprenol + 28 UDP-alpha-D-galactofuranose = [beta-D-galactofuranosyl-(1-&gt;5)-beta-D-galactofuranosyl-(1-&gt;6)]14-beta-D-galactofuranosyl-(1-&gt;5)-beta-D-galactofuranosyl-(1-&gt;4)-alpha-L-rhamnopyranosyl-(1-&gt;3)-N-acetyl-alpha-D-glucosaminyl-diphospho-trans,octa-cis-decaprenol + 28 UDP + 28 H(+). It functions in the pathway cell wall biogenesis; cell wall polysaccharide biosynthesis. In terms of biological role, involved in the galactan polymerization of the arabinogalactan (AG) region of the mycolylarabinogalactan-peptidoglycan (mAGP) complex, an essential component of the mycobacteria cell wall. Thus, successively transfers approximately 28 galactofuranosyl (Galf) residues from UDP-galactofuranose (UDP-Galf) onto the galactofuranosyl-galactofuranosyl-rhamnosyl-GlcNAc-diphospho-decaprenol (Galf-Galf-Rha-GlcNAc-PP-C50) acceptor produced by GlfT1, with alternating 1-&gt;5 and 1-&gt;6 links, forming a galactan domain with approximately 30 galactofuranosyl residues. In Mycolicibacterium smegmatis (strain ATCC 700084 / mc(2)155) (Mycobacterium smegmatis), this protein is Galactofuranosyltransferase GlfT2.